We begin with the raw amino-acid sequence, 184 residues long: Ribosome-recycling factor (184 aa).

Belongs to the RRF family.

It is found in the cytoplasm. Its function is as follows. Responsible for the release of ribosomes from messenger RNA at the termination of protein biosynthesis. May increase the efficiency of translation by recycling ribosomes from one round of translation to another. The polypeptide is Ribosome-recycling factor (Borreliella afzelii (strain PKo) (Borrelia afzelii)).